The primary structure comprises 309 residues: Probable manganese-dependent inorganic pyrophosphatase (309 aa).

6 residues coordinate Mn(2+): histidine 9, aspartate 13, aspartate 15, aspartate 75, histidine 97, and aspartate 149.

This sequence belongs to the PPase class C family. It depends on Mn(2+) as a cofactor.

Its subcellular location is the cytoplasm. The catalysed reaction is diphosphate + H2O = 2 phosphate + H(+). The polypeptide is Probable manganese-dependent inorganic pyrophosphatase (Bacillus velezensis (strain DSM 23117 / BGSC 10A6 / LMG 26770 / FZB42) (Bacillus amyloliquefaciens subsp. plantarum)).